We begin with the raw amino-acid sequence, 431 residues long: U-box domain-containing protein 20 (431 aa).

The 75-residue stretch at 32–106 (TIPSQFQCPI…QGWCGSSLGG (75 aa)) folds into the U-box domain.

The catalysed reaction is S-ubiquitinyl-[E2 ubiquitin-conjugating enzyme]-L-cysteine + [acceptor protein]-L-lysine = [E2 ubiquitin-conjugating enzyme]-L-cysteine + N(6)-ubiquitinyl-[acceptor protein]-L-lysine.. It participates in protein modification; protein ubiquitination. Functionally, functions as an E3 ubiquitin ligase. This Arabidopsis thaliana (Mouse-ear cress) protein is U-box domain-containing protein 20 (PUB20).